A 2255-amino-acid chain; its full sequence is Non-reducing polyketide synthase nvfA (2255 aa).

Residues 13-251 are N-terminal acylcarrier protein transacylase domain (SAT); it reads ILFGPQSSDM…HHPDHTAAVE (239 aa). In terms of domain architecture, Ketosynthase family 3 (KS3) spans 365 to 781; sequence VRPIAVTGMA…GSNAAIVLRQ (417 aa). Catalysis depends on for beta-ketoacyl synthase activity residues Cys530, His665, and His704. The malonyl-CoA:ACP transacylase (MAT) domain stretch occupies residues 887–1187; sequence LCFGGQNGNT…QASDLKSPQA (301 aa). The For acyl/malonyl transferase activity role is filled by Ser974. The interval 1229-1357 is N-terminal hotdog fold; the sequence is EPMGLVQVLE…GRISLHPFDS (129 aa). Residues 1229 to 1536 enclose the PKS/mFAS DH domain; that stretch reads EPMGLVQVLE…FTSVSIRALT (308 aa). The product template (PT) domain stretch occupies residues 1232-1535; that stretch reads GLVQVLEKRP…TFTSVSIRAL (304 aa). The active-site Proton acceptor; for dehydratase activity is His1262. Residues 1385–1536 are C-terminal hotdog fold; the sequence is SSSGLKGSAV…FTSVSIRALT (152 aa). Asp1443 (proton donor; for dehydratase activity) is an active-site residue. One can recognise a Carrier domain in the interval 1581 to 1655; the sequence is TNKFPAIQAM…CLVQAIFPGA (75 aa). Ser1615 bears the O-(pantetheine 4'-phosphoryl)serine mark. The tract at residues 1809–2042 is methyltransferase (CMeT) domain; sequence HHASEHTLLR…GYNWVNWSCN (234 aa). Residues 2109-2227 are thioesterase (TE) domain; that stretch reads LLIHGGGHVM…ILSFYCPTDY (119 aa). The active-site For thioesterase activity is the Ser2194.

The catalysed reaction is 3 malonyl-CoA + acetyl-CoA + 2 S-adenosyl-L-methionine = 3,5-dimethylorsellinate + 2 S-adenosyl-L-homocysteine + 3 CO2 + 4 CoA. It functions in the pathway secondary metabolite biosynthesis; terpenoid biosynthesis. Non-reducing polyketide synthase; part of the gene cluster that mediates the biosynthesis of novofumigatonin, a heavily oxygenated meroterpenoid containing a unique orthoester moiety. The first step of the pathway is the synthesis of 3,5-dimethylorsellinic acid (DMOA) by the polyketide synthase nvfA via condensation of one acetyl-CoA starter unit with 3 malonyl-CoA units and 2 methylations. DMOA is then converted to farnesyl-DMOA by the farnesyltransferase nvfB. Epoxydation by FAD-dependent monooxygenase nvfK, followed by a protonation-initiated cyclization catalyzed by the terpene cyclase nvfL leads to the production of asnavolin H. The short chain dehydrogenase nvfC then as a 3-OH dehydrogenase of asnovolin H to yield chemesin D. There are two branches to synthesize asnovolin A from chemesin D. In one branch, chemesin D undergoes Baeyer-Villiger oxidation by nvfH, methylation by nvfJ, and enoyl reduction by the nvfM D enoylreductase that reduces the double bond between C-5'and C-6', to form respectively asnovolin I, asnovolin K, and asnovolin A. In the other branch, the methylation precedes the Baeyer-Villiger oxidation and the enoyl reduction to yield asnovolin A via the asnovolin J intermediate. Asnovolin A is further converted to fumigatonoid A by the Fe(II)/2-oxoglutarate-dependent dioxygenase nvfI that catalyzes an endoperoxidation reaction. The alpha/beta hydrolase nvfD then acts as an epimerase that converts fumigatonoid A to its C-5' epimer, which then undergoes spontaneous or nvfD-catalyzed lactonization. The following step utilizes the ketoreductase nvfG to produce fumigatonoid B. The dioxygenase nvfE further converts fumigatonoid B into fumigatonoid C. Finally the Fe(II)/2-oxoglutarate-dependent dioxygenase nvfF catalyzes two rounds of oxidation to transform fumigatonoid C into the end product, novofumigatonin A. The polypeptide is Non-reducing polyketide synthase nvfA (Aspergillus novofumigatus (strain IBT 16806)).